A 239-amino-acid polypeptide reads, in one-letter code: Ubiquinone biosynthesis O-methyltransferase (239 aa).

S-adenosyl-L-methionine-binding residues include Arg42, Gly62, Asp83, and Met127.

The protein belongs to the methyltransferase superfamily. UbiG/COQ3 family.

It catalyses the reaction a 3-demethylubiquinol + S-adenosyl-L-methionine = a ubiquinol + S-adenosyl-L-homocysteine + H(+). The catalysed reaction is a 3-(all-trans-polyprenyl)benzene-1,2-diol + S-adenosyl-L-methionine = a 2-methoxy-6-(all-trans-polyprenyl)phenol + S-adenosyl-L-homocysteine + H(+). It participates in cofactor biosynthesis; ubiquinone biosynthesis. In terms of biological role, O-methyltransferase that catalyzes the 2 O-methylation steps in the ubiquinone biosynthetic pathway. The sequence is that of Ubiquinone biosynthesis O-methyltransferase from Pectobacterium carotovorum subsp. carotovorum (strain PC1).